A 176-amino-acid chain; its full sequence is Protein MOTHER of FT and TFL1 homolog 1 (176 aa).

This sequence belongs to the phosphatidylethanolamine-binding protein family.

May form complexes with phosphorylated ligands by interfering with kinases and their effectors. In Oryza sativa subsp. japonica (Rice), this protein is Protein MOTHER of FT and TFL1 homolog 1.